The sequence spans 105 residues: Large ribosomal subunit protein bL21 (105 aa).

The protein belongs to the bacterial ribosomal protein bL21 family. Part of the 50S ribosomal subunit. Contacts protein L20.

Its function is as follows. This protein binds to 23S rRNA in the presence of protein L20. The polypeptide is Large ribosomal subunit protein bL21 (Rickettsia typhi (strain ATCC VR-144 / Wilmington)).